A 215-amino-acid polypeptide reads, in one-letter code: Large ribosomal subunit protein uL3 (215 aa).

The segment at 136–155 (GVSISHRSHGSTGQRQDPGK) is disordered. The residue at position 151 (Gln151) is an N5-methylglutamine.

The protein belongs to the universal ribosomal protein uL3 family. In terms of assembly, part of the 50S ribosomal subunit. Forms a cluster with proteins L14 and L19. Methylated by PrmB.

One of the primary rRNA binding proteins, it binds directly near the 3'-end of the 23S rRNA, where it nucleates assembly of the 50S subunit. The sequence is that of Large ribosomal subunit protein uL3 from Rickettsia africae (strain ESF-5).